The chain runs to 394 residues: Elongation factor Tu (394 aa).

The region spanning 10-204 (KAHVNIGTIG…SVDSYIPTPT (195 aa)) is the tr-type G domain. Positions 19–26 (GHIDHGKT) are G1. 19–26 (GHIDHGKT) contacts GTP. Thr26 is a binding site for Mg(2+). The G2 stretch occupies residues 60 to 64 (GITIN). Residues 81-84 (DCPG) are G3. Residues 81–85 (DCPGH) and 136–139 (NKCD) each bind GTP. Residues 136-139 (NKCD) form a G4 region. The interval 174-176 (SAL) is G5.

This sequence belongs to the TRAFAC class translation factor GTPase superfamily. Classic translation factor GTPase family. EF-Tu/EF-1A subfamily. As to quaternary structure, monomer.

It localises to the cytoplasm. It catalyses the reaction GTP + H2O = GDP + phosphate + H(+). GTP hydrolase that promotes the GTP-dependent binding of aminoacyl-tRNA to the A-site of ribosomes during protein biosynthesis. This is Elongation factor Tu from Malacoplasma penetrans (strain HF-2) (Mycoplasma penetrans).